The sequence spans 622 residues: Intermediate filament protein ifc-2 (622 aa).

The segment at 19–54 is head; sequence SGTYASGFGQLVSGMSSAGAICTTQIRDAREREKRE. One can recognise an IF rod domain in the interval 51 to 399; the sequence is EKREIGLLND…ILLNGANVTT (349 aa). The tract at residues 55–86 is coil 1A; the sequence is IGLLNDRLADYIEKVRFLEAQNRCLSHDIDIL. The tract at residues 87-99 is linker 1; the sequence is RNGFSGGGHVSGL. Residues 100–237 are coil 1B; the sequence is FDAEINQAKH…TENNVRIEQE (138 aa). Residues 238–255 form a linker 12 region; sequence LVFIRRDTTADNRDYFRH. The segment at 256-399 is coil 2; the sequence is ELQAAIRDIR…ILLNGANVTT (144 aa). The tract at residues 400–550 is tail; the sequence is YTSNTHGSGS…RVDVGGFRIE (151 aa). The LTD domain occupies 509–622; the sequence is SGRHFHSWYL…EERAWFVYLD (114 aa).

This sequence belongs to the intermediate filament family. Expressed in intestinal cells and at desmosomes in intestine and pharynx of the larva.

It localises to the cytoplasm. Functionally, cytoplasmic intermediate filaments provide mechanical strength to cells. Not essential protein, although its absence leads to mild defects in locomotion. This chain is Intermediate filament protein ifc-2 (ifc-2), found in Caenorhabditis elegans.